Consider the following 473-residue polypeptide: Deoxyribodipyrimidine photo-lyase (473 aa).

The Photolyase/cryptochrome alpha/beta domain occupies 2–134; the sequence is PTHLVWFRRD…ICEGFDDSVI (133 aa). Residues Asn-109 and Glu-110 each contribute to the (6R)-5,10-methylene-5,6,7,8-tetrahydrofolate site. Residue Tyr-224 coordinates FAD. Arg-228 provides a ligand contact to DNA. 236-240 is an FAD binding site; sequence TSRLS. Interaction with DNA stretches follow at residues 276–283 and 343–344; these read ELIWREFY and NR. FAD is bound at residue 374–376; sequence DGD. Gln-406 contacts DNA.

Belongs to the DNA photolyase class-1 family. As to quaternary structure, monomer. Requires FAD as cofactor. (6R)-5,10-methylene-5,6,7,8-tetrahydrofolate serves as cofactor.

The catalysed reaction is cyclobutadipyrimidine (in DNA) = 2 pyrimidine residues (in DNA).. Functionally, involved in repair of UV radiation-induced DNA damage. Catalyzes the light-dependent monomerization (300-600 nm) of cyclobutyl pyrimidine dimers (in cis-syn configuration), which are formed between adjacent bases on the same DNA strand upon exposure to ultraviolet radiation. In Salmonella typhimurium (strain LT2 / SGSC1412 / ATCC 700720), this protein is Deoxyribodipyrimidine photo-lyase (phrB).